The primary structure comprises 506 residues: Lysine--tRNA ligase (506 aa).

Mg(2+) is bound by residues Glu-416 and Glu-423.

The protein belongs to the class-II aminoacyl-tRNA synthetase family. Homodimer. The cofactor is Mg(2+).

The protein localises to the cytoplasm. The enzyme catalyses tRNA(Lys) + L-lysine + ATP = L-lysyl-tRNA(Lys) + AMP + diphosphate. In Xylella fastidiosa (strain 9a5c), this protein is Lysine--tRNA ligase (lysS).